Here is a 1057-residue protein sequence, read N- to C-terminus: Collagen alpha-1(I) chain (1057 aa).

A Pyrrolidone carboxylic acid modification is found at Gln1. Positions 1-10 (QLSYGYDEKS) are enriched in basic and acidic residues. A nonhelical region (N-terminal) region spans residues 1–17 (QLSYGYDEKSAGGISVP). A disordered region spans residues 1–1057 (QLSYGYDEKS…AHDGGRYYRA (1057 aa)). The residue at position 9 (Lys9) is an Allysine. At Ser10 the chain carries Phosphoserine. Collagen-like domains are found at residues 18 to 76 (GPMG…EAGK), 75 to 134 (GKPG…PGEN), 135 to 193 (GAPG…AKGE), and 195 to 252 (GPQG…GFPG). Residues 18 to 1031 (GPMGPSGPRG…PGPPGPPGPP (1014 aa)) form a triple-helical region region. 4-hydroxyproline occurs at positions 29, 32, 35, 44, 47, 50, 65, 80, 86, 95, and 101. The segment covering 37-56 (PQGFQGPPGEPGEPGASGPM) has biased composition (low complexity). The segment covering 68–82 (NGDDGEAGKPGRPGE) has biased composition (basic and acidic residues). Lys104 is modified (5-hydroxylysine; alternate). Lys104 is a glycosylation site (O-linked (Gal...) hydroxylysine; alternate). Phosphoserine is present on Ser110. Positions 118–134 (DAGPAGPKGEPGSPGEN) are enriched in low complexity. 4-hydroxyproline occurs at positions 128, 131, 137, 146, and 152. Residues 157–170 (PAGARGNDGATGAA) are compositionally biased toward low complexity. Positions 172 to 184 (PPGPTGPAGPPGF) are enriched in pro residues. 11 positions are modified to 4-hydroxyproline: Pro173, Pro182, Pro185, Pro212, Pro215, Pro227, Pro233, Pro242, Pro248, Pro251, and Pro266. The segment covering 218–269 (AGAAGPAGNPGADGQPGAKGANGAPGIAGAPGFPGARGPAGPQGPSGAPGPK) has biased composition (low complexity). The residue at position 269 (Lys269) is a 5-hydroxylysine. 4-hydroxyproline occurs at positions 275, 278, 290, 292, 299, 314, 320, 323, 329, and 335. Low complexity predominate over residues 287–296 (KGEPGPIGIQ). The segment covering 324–333 (GERGGPGSRG) has biased composition (gly residues). Lys344 is modified (5-hydroxylysine). 4-hydroxyproline is present on residues Pro353, Pro362, Pro368, Pro374, Pro383, Pro386, Pro395, Pro404, Pro410, Pro422, Pro431, Pro440, Pro443, Pro461, Pro479, Pro485, Pro491, Pro497, Pro503, Pro509, Pro521, Pro530, Pro542, Pro554, Pro557, Pro563, Pro569, and Pro578. Positions 377-403 (KGLTGSPGSPGPDGKTGPPGPAGQDGR) are enriched in low complexity. Positions 412–431 (ARGQAGVMGFPGPKGAAGEP) are enriched in low complexity. The span at 473–500 (QGPAGSPGFQGLPGPAGPPGEAGKPGEQ) shows a compositional bias: low complexity. Collagen-like domains lie at 522-579 (GERG…GLPG) and 555-613 (GAPG…PPGP). Residues 539-566 (NGAPGNDGAKGDAGAPGAPGSQGAPGLQ) are compositionally biased toward low complexity. Lys590 is subject to 5-hydroxylysine. Pro596, Pro611, and Pro617 each carry 4-hydroxyproline. 2 consecutive Collagen-like domains span residues 618–676 (GDKG…AKGD) and 678–736 (GPPG…PPGP). Positions 623-637 (AGPSGPAGPTGARGA) are enriched in low complexity. Ser626 is modified (phosphoserine). Residues Pro638, Pro644, Pro647, Pro656, Pro662, Pro680, Pro689, and Pro698 each carry the 4-hydroxyproline modification. Over residues 650–677 (AGFAGPPGADGQPGAKGEPGDAGAKGDA) the composition is skewed to low complexity. Lys701 bears the 5-hydroxylysine mark. A compositionally biased stretch (low complexity) spans 706–722 (SAGPPGATGFPGAAGRV). 4-hydroxyproline is present on residues Pro710 and Pro716. Pro724 bears the 3-hydroxyproline mark. A 4-hydroxyproline mark is found at Pro725, Pro734, Pro737, Pro758, Pro764, Pro767, Pro776, and Pro785. Over residues 751–760 (ETGPAGRPGE) the composition is skewed to low complexity. A compositionally biased stretch (low complexity) spans 770-785 (AGEKGSPGADGPAGAP). Positions 789–798 (GPQGIGGQRG) are enriched in gly residues. 4-hydroxyproline occurs at positions 803, 812, 815, 821, 836, 842, 848, 857, 863, and 869. A Collagen-like 9 domain is found at 804–861 (GQRGERGFPGLPGPSGEPGKQGPSGSSGERGPPGPAGPPGLAGPPGESGREGAPGAEG). The segment covering 835-845 (PPGPAGPPGLA) has biased composition (pro residues). Residue Lys872 is modified to 5-hydroxylysine. Over residues 881-896 (SGPPGAPGAPGAPGPV) the composition is skewed to pro residues. 3 positions are modified to 4-hydroxyproline: Pro884, Pro887, and Pro890. Residues 917–931 (AGPAGVRGPAGPQGP) are compositionally biased toward low complexity. Collagen-like domains lie at 918 to 976 (GPAG…ASGP) and 972 to 1030 (GASG…PPGP). Positions 932 to 946 (RGDKGETGEQGDRGL) are enriched in basic and acidic residues. 5-hydroxylysine is present on Lys935. A 5-hydroxylysine; alternate modification is found at Lys947. Residue Lys947 is glycosylated (O-linked (Gal...) hydroxylysine; alternate). 6 positions are modified to 4-hydroxyproline: Pro959, Pro962, Pro965, Pro983, Pro998, and Pro1001. Positions 965–997 (PGEQGPSGASGPAGPRGPPGSAGAPGKDGLNGL) are enriched in low complexity. Pro1003 carries the post-translational modification 3-hydroxyproline. Pro1004 bears the 4-hydroxyproline mark. The span at 1016 to 1031 (VGPPGPPGPPGPPGPP) shows a compositional bias: pro residues. Position 1018 is a 3-hydroxyproline (Pro1018). A 4-hydroxyproline modification is found at Pro1019. At Pro1021 the chain carries 3-hydroxyproline. Pro1022 carries the post-translational modification 4-hydroxyproline. The residue at position 1024 (Pro1024) is a 3-hydroxyproline. A 4-hydroxyproline mark is found at Pro1025, Pro1028, and Pro1031. Residues 1032-1055 (SGAFDFSFLPQPPQEKAHDGGRYY) are nonhelical region (C-terminal). Basic and acidic residues predominate over residues 1046–1057 (EKAHDGGRYYRA). Residue Lys1047 is modified to Allysine.

It belongs to the fibrillar collagen family. In terms of assembly, trimers of one alpha 2(I) and two alpha 1(I) chains. Contains mostly 4-hydroxyproline. Proline residues at the third position of the tripeptide repeating unit (G-X-Y) are hydroxylated in some or all of the chains. In terms of processing, contains 3-hydroxyproline at a few sites. This modification occurs on the first proline residue in the sequence motif Gly-Pro-Hyp, where Hyp is 4-hydroxyproline. Post-translationally, lysine residues at the third position of the tripeptide repeating unit (G-X-Y) are 5-hydroxylated in some or all of the chains. O-glycosylated on hydroxylated lysine residues. The O-linked glycan consists of a Glc-Gal disaccharide.

The protein localises to the secreted. It localises to the extracellular space. The protein resides in the extracellular matrix. In terms of biological role, type I collagen is a member of group I collagen (fibrillar forming collagen). The protein is Collagen alpha-1(I) chain (COL1A1) of Mammut americanum (American mastodon).